Reading from the N-terminus, the 360-residue chain is Phenylalanine--tRNA ligase alpha subunit (360 aa).

A Mg(2+)-binding site is contributed by Glu-260.

It belongs to the class-II aminoacyl-tRNA synthetase family. Phe-tRNA synthetase alpha subunit type 1 subfamily. As to quaternary structure, tetramer of two alpha and two beta subunits. Mg(2+) serves as cofactor.

The protein resides in the cytoplasm. It carries out the reaction tRNA(Phe) + L-phenylalanine + ATP = L-phenylalanyl-tRNA(Phe) + AMP + diphosphate + H(+). The sequence is that of Phenylalanine--tRNA ligase alpha subunit from Rhodopseudomonas palustris (strain ATCC BAA-98 / CGA009).